A 257-amino-acid polypeptide reads, in one-letter code: uncharacterized protein (257 aa).

Disordered stretches follow at residues 1–164 (MERS…AGAC) and 225–257 (TAWS…RARA). Residues 10–28 (CGEEPRSGSRRLPKAEGDK) are compositionally biased toward basic and acidic residues. Positions 54–65 (RPNRASGRRRRS) are enriched in basic residues. Pro residues predominate over residues 125–139 (RPTPRPCAGPAPPPA). Over residues 144–162 (RCRRPRRWPRAGRRGRRAG) the composition is skewed to basic residues.

This is an uncharacterized protein from Homo sapiens (Human).